We begin with the raw amino-acid sequence, 274 residues long: tRNA-cytidine(32) 2-sulfurtransferase (274 aa).

The PP-loop motif signature appears at 40-45 (SGGKDS). [4Fe-4S] cluster-binding residues include Cys115, Cys118, and Cys206.

Belongs to the TtcA family. Homodimer. Mg(2+) serves as cofactor. [4Fe-4S] cluster is required as a cofactor.

It localises to the cytoplasm. It catalyses the reaction cytidine(32) in tRNA + S-sulfanyl-L-cysteinyl-[cysteine desulfurase] + AH2 + ATP = 2-thiocytidine(32) in tRNA + L-cysteinyl-[cysteine desulfurase] + A + AMP + diphosphate + H(+). Its pathway is tRNA modification. In terms of biological role, catalyzes the ATP-dependent 2-thiolation of cytidine in position 32 of tRNA, to form 2-thiocytidine (s(2)C32). The sulfur atoms are provided by the cysteine/cysteine desulfurase (IscS) system. This is tRNA-cytidine(32) 2-sulfurtransferase from Ectopseudomonas mendocina (strain ymp) (Pseudomonas mendocina).